We begin with the raw amino-acid sequence, 347 residues long: Ribosomal RNA small subunit methyltransferase C (347 aa).

It belongs to the methyltransferase superfamily. RsmC family. In terms of assembly, monomer.

It localises to the cytoplasm. The enzyme catalyses guanosine(1207) in 16S rRNA + S-adenosyl-L-methionine = N(2)-methylguanosine(1207) in 16S rRNA + S-adenosyl-L-homocysteine + H(+). In terms of biological role, specifically methylates the guanine in position 1207 of 16S rRNA in the 30S particle. The sequence is that of Ribosomal RNA small subunit methyltransferase C from Yersinia enterocolitica serotype O:8 / biotype 1B (strain NCTC 13174 / 8081).